The chain runs to 475 residues: F-box/kelch-repeat protein At1g22040 (475 aa).

The tract at residues methionine 1–arginine 28 is disordered. Residues cysteine 41–arginine 87 enclose the F-box domain. Kelch repeat units follow at residues glutamate 94–serine 140, glycine 182–lysine 228, lysine 229–alanine 279, proline 306–glutamate 350, and tyrosine 352–glycine 401.

This is F-box/kelch-repeat protein At1g22040 from Arabidopsis thaliana (Mouse-ear cress).